A 315-amino-acid polypeptide reads, in one-letter code: DNA-directed RNA polymerase subunit alpha (315 aa).

An alpha N-terminal domain (alpha-NTD) region spans residues 1–228 (MAQFQIECVE…DLFNPLKDIS (228 aa)). Residues 238-315 (IPDDPTAQIP…LPQERSSKHS (78 aa)) are alpha C-terminal domain (alpha-CTD).

Belongs to the RNA polymerase alpha chain family. In cyanobacteria the RNAP catalytic core is composed of 2 alpha, 1 beta, 1 beta', 1 gamma and 1 omega subunit. When a sigma factor is associated with the core the holoenzyme is formed, which can initiate transcription.

The enzyme catalyses RNA(n) + a ribonucleoside 5'-triphosphate = RNA(n+1) + diphosphate. Its function is as follows. DNA-dependent RNA polymerase catalyzes the transcription of DNA into RNA using the four ribonucleoside triphosphates as substrates. The sequence is that of DNA-directed RNA polymerase subunit alpha from Trichormus variabilis (strain ATCC 29413 / PCC 7937) (Anabaena variabilis).